We begin with the raw amino-acid sequence, 507 residues long: Glycerol kinase (507 aa).

An ADP-binding site is contributed by T15. Positions 15, 16, and 17 each coordinate ATP. T15 is a binding site for sn-glycerol 3-phosphate. R19 provides a ligand contact to ADP. 4 residues coordinate sn-glycerol 3-phosphate: R85, E86, Y137, and D250. The glycerol site is built by R85, E86, Y137, D250, and Q251. T272, G316, and G418 together coordinate ADP. ATP is bound by residues T272, G316, and G418.

This sequence belongs to the FGGY kinase family.

It carries out the reaction glycerol + ATP = sn-glycerol 3-phosphate + ADP + H(+). Its pathway is polyol metabolism; glycerol degradation via glycerol kinase pathway; sn-glycerol 3-phosphate from glycerol: step 1/1. Inhibited by fructose 1,6-bisphosphate (FBP). Key enzyme in the regulation of glycerol uptake and metabolism. Catalyzes the phosphorylation of glycerol to yield sn-glycerol 3-phosphate. The sequence is that of Glycerol kinase from Malacoplasma penetrans (strain HF-2) (Mycoplasma penetrans).